Reading from the N-terminus, the 624-residue chain is Chaperone protein HtpG (624 aa).

The tract at residues 1–336 (MNMKGQETRG…SNDLPLNVSR (336 aa)) is a; substrate-binding. The segment at 337–552 (EILQDSRITQ…ADEMSTQMAK (216 aa)) is b. The c stretch occupies residues 553–624 (LFAAAGQQAP…IRRMNQLLTA (72 aa)).

The protein belongs to the heat shock protein 90 family. In terms of assembly, homodimer.

It localises to the cytoplasm. Its function is as follows. Molecular chaperone. Has ATPase activity. The chain is Chaperone protein HtpG from Yersinia pestis bv. Antiqua (strain Antiqua).